The chain runs to 439 residues: Maintenance of mitochondrial morphology protein 1 (439 aa).

The Lumenal portion of the chain corresponds to 1 to 76 (MSQDLIETTA…NGNTWSFTQG (76 aa)). A helical membrane pass occupies residues 77-97 (LVIGQVSVIFIIIVFVKFFVF). The Cytoplasmic segment spans residues 98-439 (ADSSSHIPTK…TPGEYVNSNI (342 aa)). Disordered regions lie at residues 125–145 (KHSN…SLDS), 309–336 (MNGY…DGGT), and 405–425 (REPV…GTSA). The SMP-LTD domain occupies 165-395 (ASESLDWFNV…EPRFQVVRLP (231 aa)). 2 stretches are compositionally biased toward low complexity: residues 315–326 (ENANGDGASSSN) and 410–424 (KKTT…NGTS).

It belongs to the MMM1 family. Homodimer. Component of the ER-mitochondria encounter structure (ERMES) or MDM complex, composed of MMM1, MDM10, MDM12 and MDM34. An MMM1 homodimer associates with one molecule of MDM12 on each side in a pairwise head-to-tail manner, and the SMP-LTD domains of MMM1 and MDM12 generate a continuous hydrophobic tunnel for phospholipid trafficking.

The protein localises to the endoplasmic reticulum membrane. Its function is as follows. Component of the ERMES/MDM complex, which serves as a molecular tether to connect the endoplasmic reticulum (ER) and mitochondria. Components of this complex are involved in the control of mitochondrial shape and protein biogenesis, and function in nonvesicular lipid trafficking between the ER and mitochondria. The MDM12-MMM1 subcomplex functions in the major beta-barrel assembly pathway that is responsible for biogenesis of all outer membrane beta-barrel proteins, and acts in a late step after the SAM complex. The MDM10-MDM12-MMM1 subcomplex further acts in the TOM40-specific pathway after the action of the MDM12-MMM1 complex. Essential for establishing and maintaining the structure of mitochondria and maintenance of mtDNA nucleoids. The polypeptide is Maintenance of mitochondrial morphology protein 1 (Candida albicans (strain WO-1) (Yeast)).